The chain runs to 87 residues: Small ribosomal subunit protein bS20 (87 aa).

The interval 1–26 (MANIKSAKKRAVQSEKARKHNASRRS) is disordered.

It belongs to the bacterial ribosomal protein bS20 family.

Functionally, binds directly to 16S ribosomal RNA. The chain is Small ribosomal subunit protein bS20 from Enterobacter sp. (strain 638).